A 228-amino-acid chain; its full sequence is MILLLLALISATTAFQGDVVNLTLNEQATVTLDECMYFLDTLQNSSTLPPGEYGIKITHSCLGNEQIEIRTNTTTDVITIKVEKDPNPEESLVEAENEVLSLRKEVQRLEGEVSYYKKLFEVLNKINVDLYDKLQNLATENDELKRELELYKSKAGNYSQLIDELRLELSKMNETVRQLQATNEDLQANLTKIDAELSRASANLELFQTLFFVTLSFLVGSAFALMRR.

The first 16 residues, 1-16 (MILLLLALISATTAFQ), serve as a signal peptide directing secretion. A helical membrane pass occupies residues 206–225 (LFQTLFFVTLSFLVGSAFAL).

To A.fulgidus AF_1225.

The protein localises to the membrane. This is an uncharacterized protein from Archaeoglobus fulgidus (strain ATCC 49558 / DSM 4304 / JCM 9628 / NBRC 100126 / VC-16).